The following is a 179-amino-acid chain: ATP synthase subunit b (179 aa).

The helical transmembrane segment at 13-33 threads the bilayer; the sequence is IHIDELVFGLIAFAVIFALVY.

Belongs to the ATPase B chain family. As to quaternary structure, F-type ATPases have 2 components, F(1) - the catalytic core - and F(0) - the membrane proton channel. F(1) has five subunits: alpha(3), beta(3), gamma(1), delta(1), epsilon(1). F(0) has three main subunits: a(1), b(2) and c(10-14). The alpha and beta chains form an alternating ring which encloses part of the gamma chain. F(1) is attached to F(0) by a central stalk formed by the gamma and epsilon chains, while a peripheral stalk is formed by the delta and b chains.

The protein localises to the cell membrane. In terms of biological role, f(1)F(0) ATP synthase produces ATP from ADP in the presence of a proton or sodium gradient. F-type ATPases consist of two structural domains, F(1) containing the extramembraneous catalytic core and F(0) containing the membrane proton channel, linked together by a central stalk and a peripheral stalk. During catalysis, ATP synthesis in the catalytic domain of F(1) is coupled via a rotary mechanism of the central stalk subunits to proton translocation. Functionally, component of the F(0) channel, it forms part of the peripheral stalk, linking F(1) to F(0). The polypeptide is ATP synthase subunit b (Thermobifida fusca (strain YX)).